Here is a 207-residue protein sequence, read N- to C-terminus: U1 small nuclear ribonucleoprotein C (207 aa).

The Matrin-type zinc-finger motif lies at 4–36 (YYCDYCDTYLTHDSPSVRKQHNAGYKHKANVRI). Composition is skewed to pro residues over residues 105–115 (PPQGYMPPPGV) and 122–131 (PGAPLPPPPQ). Positions 105–207 (PPQGYMPPPG…PSAESPESNE (103 aa)) are disordered. The segment covering 132 to 144 (NGILRPPGMAPIP) has biased composition (low complexity). Positions 162 to 183 (GPPPNYNGLPPPPPYHTNPAAP) are enriched in pro residues. Residues 184-207 (PSGNFNNPNLNNPNPSAESPESNE) are compositionally biased toward low complexity.

Belongs to the U1 small nuclear ribonucleoprotein C family. U1 snRNP is composed of the 7 core Sm proteins B/B', D1, D2, D3, E, F and G that assemble in a heptameric protein ring on the Sm site of the small nuclear RNA to form the core snRNP, and at least 3 U1 snRNP-specific proteins U1-70K, U1-A and U1-C. U1-C interacts with U1 snRNA and the 5' splice-site region of the pre-mRNA.

Its subcellular location is the nucleus. Its function is as follows. Component of the spliceosomal U1 snRNP, which is essential for recognition of the pre-mRNA 5' splice-site and the subsequent assembly of the spliceosome. U1-C is directly involved in initial 5' splice-site recognition for both constitutive and regulated alternative splicing. The interaction with the 5' splice-site seems to precede base-pairing between the pre-mRNA and the U1 snRNA. Stimulates commitment or early (E) complex formation by stabilizing the base pairing of the 5' end of the U1 snRNA and the 5' splice-site region. The protein is U1 small nuclear ribonucleoprotein C of Arabidopsis thaliana (Mouse-ear cress).